The following is a 267-amino-acid chain: Myxobacterial hemagglutinin (267 aa).

4 consecutive repeat copies span residues 1–66 (MAAY…GTLS), 67–133 (SANN…SEVT), 134–200 (DGDT…GTLT), and 201–267 (SPDT…ARLG). The segment at 1-267 (MAAYLVQNQW…GPIGFRARLG (267 aa)) is 4 X 65 AA tandem repeats.

This sequence belongs to the bacterial lectin family.

In terms of biological role, this lectin might have a role in the differentiation of cells. This is Myxobacterial hemagglutinin (mbhA) from Myxococcus xanthus.